The primary structure comprises 147 residues: UPF0208 membrane protein PM0703 (147 aa).

2 helical membrane passes run 32 to 52 and 65 to 85; these read VIKA…FAIT and LAIA…GLYW.

Belongs to the UPF0208 family.

It localises to the cell inner membrane. The sequence is that of UPF0208 membrane protein PM0703 from Pasteurella multocida (strain Pm70).